We begin with the raw amino-acid sequence, 229 residues long: Ribonuclease 3 (229 aa).

The RNase III domain maps to 8–130 (LTELEKIVGY…IIGAIYLDSD (123 aa)). Glu-43 contributes to the Mg(2+) binding site. The active site involves Asp-47. Mg(2+) is bound by residues Asp-116 and Glu-119. Glu-119 is an active-site residue. One can recognise a DRBM domain in the interval 157–227 (DPKTRLQELL…ATAALEHLQE (71 aa)). Positions 201 to 229 (SPFKGTGTSRRKAEQAAATAALEHLQESA) are disordered.

This sequence belongs to the ribonuclease III family. In terms of assembly, homodimer. Mg(2+) is required as a cofactor.

The protein localises to the cytoplasm. It catalyses the reaction Endonucleolytic cleavage to 5'-phosphomonoester.. Functionally, digests double-stranded RNA. Involved in the processing of primary rRNA transcript to yield the immediate precursors to the large and small rRNAs (23S and 16S). Processes some mRNAs, and tRNAs when they are encoded in the rRNA operon. Processes pre-crRNA and tracrRNA of type II CRISPR loci if present in the organism. The polypeptide is Ribonuclease 3 (Idiomarina loihiensis (strain ATCC BAA-735 / DSM 15497 / L2-TR)).